The sequence spans 364 residues: Uroporphyrinogen decarboxylase (364 aa).

Substrate is bound by residues 28 to 32 (RQAGR), Asp-78, Tyr-160, Thr-215, and His-333.

This sequence belongs to the uroporphyrinogen decarboxylase family. As to quaternary structure, homodimer.

The protein localises to the cytoplasm. It carries out the reaction uroporphyrinogen III + 4 H(+) = coproporphyrinogen III + 4 CO2. It functions in the pathway porphyrin-containing compound metabolism; protoporphyrin-IX biosynthesis; coproporphyrinogen-III from 5-aminolevulinate: step 4/4. In terms of biological role, catalyzes the decarboxylation of four acetate groups of uroporphyrinogen-III to yield coproporphyrinogen-III. This is Uroporphyrinogen decarboxylase from Burkholderia thailandensis (strain ATCC 700388 / DSM 13276 / CCUG 48851 / CIP 106301 / E264).